The following is a 198-amino-acid chain: dCTP deaminase (198 aa).

DCTP-binding positions include 99-104 (RSSLGR), 125-127 (TLE), and Gln144. Glu127 serves as the catalytic Proton donor/acceptor.

Belongs to the dCTP deaminase family. Homotrimer.

The catalysed reaction is dCTP + H2O + H(+) = dUTP + NH4(+). Its pathway is pyrimidine metabolism; dUMP biosynthesis; dUMP from dCTP (dUTP route): step 1/2. Its function is as follows. Catalyzes the deamination of dCTP to dUTP. This chain is dCTP deaminase, found in Rhodopirellula baltica (strain DSM 10527 / NCIMB 13988 / SH1).